We begin with the raw amino-acid sequence, 761 residues long: 5-methyltetrahydropteroyltriglutamate--homocysteine methyltransferase (761 aa).

5-methyltetrahydropteroyltri-L-glutamate-binding positions include Arg16 to Lys19 and Lys116. L-homocysteine-binding positions include Ile437 to Ser439 and Glu490. L-methionine-binding positions include Ile437–Ser439 and Glu490. 5-methyltetrahydropteroyltri-L-glutamate-binding positions include Arg521 to Cys522 and Trp567. Asp605 lines the L-homocysteine pocket. Residue Asp605 participates in L-methionine binding. Position 611 (Glu611) interacts with 5-methyltetrahydropteroyltri-L-glutamate. Zn(2+)-binding residues include His647, Cys649, and Glu671. The active-site Proton donor is the His700. Cys732 serves as a coordination point for Zn(2+).

The protein belongs to the vitamin-B12 independent methionine synthase family. The cofactor is Zn(2+).

It carries out the reaction 5-methyltetrahydropteroyltri-L-glutamate + L-homocysteine = tetrahydropteroyltri-L-glutamate + L-methionine. It participates in amino-acid biosynthesis; L-methionine biosynthesis via de novo pathway; L-methionine from L-homocysteine (MetE route): step 1/1. Its function is as follows. Catalyzes the transfer of a methyl group from 5-methyltetrahydrofolate to homocysteine resulting in methionine formation. The polypeptide is 5-methyltetrahydropteroyltriglutamate--homocysteine methyltransferase (Chromohalobacter salexigens (strain ATCC BAA-138 / DSM 3043 / CIP 106854 / NCIMB 13768 / 1H11)).